Reading from the N-terminus, the 209-residue chain is Putative tripartite motif-containing protein 61 (209 aa).

The RING-type zinc finger occupies 16–57; the sequence is CPICLDYLKDPVTISCGHNFCLSCIIMSWKDLHDSFPCPFCH. The segment at 92 to 133 adopts a B box-type zinc-finger fold; that stretch reads EEKHVCKKHNQVLTFFCQKDLELLCPRCSLSTDHQHHCVWPI. The Zn(2+) site is built by Cys97, His100, Cys119, and His125.

The polypeptide is Putative tripartite motif-containing protein 61 (TRIM61) (Homo sapiens (Human)).